Reading from the N-terminus, the 428-residue chain is UPF0597 protein Dde_0807 (428 aa).

It belongs to the UPF0597 family.

This is UPF0597 protein Dde_0807 from Oleidesulfovibrio alaskensis (strain ATCC BAA-1058 / DSM 17464 / G20) (Desulfovibrio alaskensis).